Here is a 268-residue protein sequence, read N- to C-terminus: Cell division coordinator CpoB (268 aa).

The N-terminal stretch at 1 to 21 (MRMCRRVVTVLALSLPLAAWA) is a signal peptide. Residues 58–94 (QLFMQLQQMQDQLSRQQGIIEELQNDVSRMKQENLER) adopt a coiled-coil conformation. A disordered region spans residues 104 to 146 (SGAAPAATPDNSSGGGASNAAPDAAAGAAAQQPAGSSQPGDPA). Low complexity predominate over residues 121 to 143 (SNAAPDAAAGAAAQQPAGSSQPG). TPR repeat units follow at residues 149 to 181 (KLYY…YPNS), 185 to 218 (GNAQ…YPKH), and 222 to 255 (PDSL…YPGT).

Belongs to the CpoB family.

The protein localises to the periplasm. Mediates coordination of peptidoglycan synthesis and outer membrane constriction during cell division. This is Cell division coordinator CpoB from Pseudomonas putida (strain ATCC 47054 / DSM 6125 / CFBP 8728 / NCIMB 11950 / KT2440).